The chain runs to 167 residues: NAD(P)H-quinone oxidoreductase subunit I, chloroplastic (167 aa).

2 consecutive 4Fe-4S ferredoxin-type domains span residues 55–84 and 95–124; these read GRIH…VDWK and LNYS…MTEE. 8 residues coordinate [4Fe-4S] cluster: Cys-64, Cys-67, Cys-70, Cys-74, Cys-104, Cys-107, Cys-110, and Cys-114.

This sequence belongs to the complex I 23 kDa subunit family. In terms of assembly, NDH is composed of at least 16 different subunits, 5 of which are encoded in the nucleus. [4Fe-4S] cluster is required as a cofactor.

The protein localises to the plastid. It localises to the chloroplast thylakoid membrane. It carries out the reaction a plastoquinone + NADH + (n+1) H(+)(in) = a plastoquinol + NAD(+) + n H(+)(out). It catalyses the reaction a plastoquinone + NADPH + (n+1) H(+)(in) = a plastoquinol + NADP(+) + n H(+)(out). Functionally, NDH shuttles electrons from NAD(P)H:plastoquinone, via FMN and iron-sulfur (Fe-S) centers, to quinones in the photosynthetic chain and possibly in a chloroplast respiratory chain. The immediate electron acceptor for the enzyme in this species is believed to be plastoquinone. Couples the redox reaction to proton translocation, and thus conserves the redox energy in a proton gradient. The chain is NAD(P)H-quinone oxidoreductase subunit I, chloroplastic from Gossypium barbadense (Sea Island cotton).